Reading from the N-terminus, the 276-residue chain is 3-methyl-2-oxobutanoate hydroxymethyltransferase (276 aa).

2 residues coordinate Mg(2+): Asp-44 and Asp-83. Residues Asp-44–Ser-45, Asp-83, and Lys-113 each bind 3-methyl-2-oxobutanoate. Glu-115 lines the Mg(2+) pocket. Glu-182 (proton acceptor) is an active-site residue.

The protein belongs to the PanB family. Homodecamer; pentamer of dimers. The cofactor is Mg(2+).

It localises to the cytoplasm. The catalysed reaction is 3-methyl-2-oxobutanoate + (6R)-5,10-methylene-5,6,7,8-tetrahydrofolate + H2O = 2-dehydropantoate + (6S)-5,6,7,8-tetrahydrofolate. It functions in the pathway cofactor biosynthesis; (R)-pantothenate biosynthesis; (R)-pantoate from 3-methyl-2-oxobutanoate: step 1/2. Functionally, catalyzes the reversible reaction in which hydroxymethyl group from 5,10-methylenetetrahydrofolate is transferred onto alpha-ketoisovalerate to form ketopantoate. This is 3-methyl-2-oxobutanoate hydroxymethyltransferase from Clostridium acetobutylicum (strain ATCC 824 / DSM 792 / JCM 1419 / IAM 19013 / LMG 5710 / NBRC 13948 / NRRL B-527 / VKM B-1787 / 2291 / W).